Consider the following 420-residue polypeptide: GDP-mannose transporter 2 (420 aa).

Residues 1–11 (MASYTPSSSRP) are compositionally biased toward polar residues. Residues 1-21 (MASYTPSSSRPHTPLGLSPRG) are disordered. At 1-76 (MASYTPSSSR…KAKKEEVCMP (76 aa)) the chain is on the cytoplasmic side. A helical transmembrane segment spans residues 77 to 97 (ASTTVLPILSYCVASIMMTVV). The Lumenal segment spans residues 98-106 (NKFVVSGRQ). Residues 107–127 (FTMTFLLLAIQSFVCVACVWL) traverse the membrane as a helical segment. Residues 128–145 (AKRIGVINFRDWDMNDAK) lie on the Cytoplasmic side of the membrane. Residues 146–168 (AWFPVSSLLVAVIYTGSKSLQFL) traverse the membrane as a helical segment. At 169-171 (SIP) the chain is on the lumenal side. A helical transmembrane segment spans residues 172-194 (VYTIFKNLTIILIAYGEVIWFGG). Residues 195–200 (HVTPLT) lie on the Cytoplasmic side of the membrane. The chain crosses the membrane as a helical span at residues 201–223 (LCSFFLMVGSSVIAAWADISTTL). At 224 to 251 (SKLSAGVAVVDPISGADVPLSSISVMDT) the chain is on the lumenal side. A helical transmembrane segment spans residues 252–272 (MNVGYLWMFINCLASAGYVLF). Residues 273-293 (MRKRIKVTGFKDWDSMFYNNL) lie on the Cytoplasmic side of the membrane. The chain crosses the membrane as a helical span at residues 294–314 (LSIPVLFVFSLIIEDWGAASF). The Lumenal portion of the chain corresponds to 315 to 323 (SRNFPEEGR). A helical transmembrane segment spans residues 324–344 (AFLLSAIAFSGAAAVFISYST). Residues 345-355 (AWCVRICGATT) are Cytoplasmic-facing. Residues 356–376 (YSLVGALNKLPVAASGILFFG) traverse the membrane as a helical segment. Residues 377-378 (DP) lie on the Lumenal side of the membrane. A helical membrane pass occupies residues 379-399 (VNFGNVSAILVGGVSGIVYAV). Topologically, residues 400–420 (AKTNQAKVEKSKQARGGESKA) are cytoplasmic.

It belongs to the TPT transporter family. SLC35D subfamily. In terms of assembly, homooligomer.

Its subcellular location is the golgi apparatus membrane. It is found in the cytoplasmic vesicle membrane. It localises to the endoplasmic reticulum membrane. Functionally, involved in the import of GDP-mannose from the cytoplasm into the Golgi lumen. The polypeptide is GDP-mannose transporter 2 (GMT2) (Cryptococcus neoformans var. neoformans serotype D (strain B-3501A) (Filobasidiella neoformans)).